We begin with the raw amino-acid sequence, 132 residues long: Small ribosomal subunit protein uS8 (132 aa).

It belongs to the universal ribosomal protein uS8 family. In terms of assembly, part of the 30S ribosomal subunit. Contacts proteins S5 and S12.

One of the primary rRNA binding proteins, it binds directly to 16S rRNA central domain where it helps coordinate assembly of the platform of the 30S subunit. The polypeptide is Small ribosomal subunit protein uS8 (Parvibaculum lavamentivorans (strain DS-1 / DSM 13023 / NCIMB 13966)).